The sequence spans 517 residues: ATP synthase subunit alpha (517 aa).

173-180 (GDRQTGKT) contacts ATP.

Belongs to the ATPase alpha/beta chains family. In terms of assembly, F-type ATPases have 2 components, CF(1) - the catalytic core - and CF(0) - the membrane proton channel. CF(1) has five subunits: alpha(3), beta(3), gamma(1), delta(1), epsilon(1). CF(0) has three main subunits: a(1), b(2) and c(9-12). The alpha and beta chains form an alternating ring which encloses part of the gamma chain. CF(1) is attached to CF(0) by a central stalk formed by the gamma and epsilon chains, while a peripheral stalk is formed by the delta and b chains.

It localises to the cell inner membrane. The catalysed reaction is ATP + H2O + 4 H(+)(in) = ADP + phosphate + 5 H(+)(out). Its function is as follows. Produces ATP from ADP in the presence of a proton gradient across the membrane. The alpha chain is a regulatory subunit. The polypeptide is ATP synthase subunit alpha (Legionella pneumophila (strain Lens)).